The chain runs to 680 residues: GTPase Obg (680 aa).

In terms of domain architecture, Obg spans Asp-2–Ile-160. One can recognise an OBG-type G domain in the interval Ala-161–Thr-336. GTP-binding positions include Gly-167–Ser-174, Phe-192–Thr-196, Asp-214–Gly-217, Asn-281–Asp-284, and Pro-317–Ile-319. Ser-174 and Thr-194 together coordinate Mg(2+). Residues Thr-371–Ile-680 form a radical SAM domain region. The region spanning Leu-383–Asp-613 is the Radical SAM core domain. [4Fe-4S] cluster is bound by residues Cys-397, Cys-401, and Cys-404.

Belongs to the TRAFAC class OBG-HflX-like GTPase superfamily. OBG GTPase family. As to quaternary structure, monomer. Mg(2+) is required as a cofactor. The cofactor is [4Fe-4S] cluster.

It localises to the cytoplasm. Functionally, an essential GTPase which binds GTP, GDP and possibly (p)ppGpp with moderate affinity, with high nucleotide exchange rates and a fairly low GTP hydrolysis rate. Plays a role in control of the cell cycle, stress response, ribosome biogenesis and in those bacteria that undergo differentiation, in morphogenesis control. In Brachyspira hyodysenteriae (strain ATCC 49526 / WA1), this protein is GTPase Obg.